The following is a 418-amino-acid chain: Tyrosine--tRNA ligase (418 aa).

Tyr-38 lines the L-tyrosine pocket. The 'HIGH' region signature appears at 43–52 (CTARSLHIGS). The L-tyrosine site is built by Tyr-175 and Gln-179. A 'KMSKS' region motif is present at residues 235 to 239 (KMGKT). Lys-238 contributes to the ATP binding site. The S4 RNA-binding domain maps to 348-413 (LSVVKLLQVS…CGKKRHLKVV (66 aa)).

Belongs to the class-I aminoacyl-tRNA synthetase family. TyrS type 1 subfamily. In terms of assembly, homodimer.

The protein resides in the cytoplasm. It carries out the reaction tRNA(Tyr) + L-tyrosine + ATP = L-tyrosyl-tRNA(Tyr) + AMP + diphosphate + H(+). Its function is as follows. Catalyzes the attachment of tyrosine to tRNA(Tyr) in a two-step reaction: tyrosine is first activated by ATP to form Tyr-AMP and then transferred to the acceptor end of tRNA(Tyr). The chain is Tyrosine--tRNA ligase from Ehrlichia ruminantium (strain Welgevonden).